The sequence spans 516 residues: MRLYSGAILCTIATLLISVSTASKTTGSHLSTRLPLPIDKPENNSLPRFLRVSTQNTENGENRVISAGLEKLTDLAKAGVSNINLGSWISKDPPAEPILRRFKLTNGMDDALASPNLKALENYVKELNTQNNNNKASVIGMFMAHYGDDAVANALMTAQRAGGEMNTIQRLRNAQLLSWLQKRKSVDDVFTLLKLRSDGYLALASPKMEVLDDYIKLVISTKSTKDSLLKTLTKGFGGKEQLATILARAREDVKTRELALALQSALINKWVRVDLLRPKHIYKKLRLNRGLDALLDRNVHTFGAFISMYNAKNPNSKASLIDSFVAQYGNKAVATALTFAKPDDAATMNLVITLQRQQFLKWKEGGISANSVFRLLDIHFNDLLSPTNPKFDTLSGYLATLSNKNLLYNEGMLRAVSKGFGGEDELAIQTARAREHLIRNGYADLDEISIATEYQRMLFGRWFKRKTKPSDIYGTTFRSSENTASNLERATAARYKDYYKEHMAPPRIDTSINPRR.

The N-terminal stretch at Met1–Ala22 is a signal peptide. The RxLR-dEER motif lies at Arg48–Arg63.

The protein belongs to the RxLR effector family.

The protein resides in the secreted. Its subcellular location is the host cell membrane. It is found in the host nucleus. It localises to the host cytoplasm. Functionally, effector that enhances P.infestans colonization of Nicotiana benthamiana leaves. In Phytophthora infestans (strain T30-4) (Potato late blight agent), this protein is RxLR effector protein PITG_15127.